The chain runs to 399 residues: ATP-dependent RNA helicase FAL1 (399 aa).

The Q motif motif lies at 23-51 (PTFESMNLKDDLLRGIYGYGFEAPSAIQS). In terms of domain architecture, Helicase ATP-binding spans 54–227 (ITQIISGTDV…KKFMSDPVKI (174 aa)). 67–74 (AQSGTGKT) serves as a coordination point for ATP. Positions 173–176 (DEAD) match the DEAD box motif. A Helicase C-terminal domain is found at 238 to 399 (GIKQYYVNVE…PVPADLSTIS (162 aa)).

Belongs to the DEAD box helicase family. DDX48/FAL1 subfamily.

It localises to the nucleus. The protein localises to the nucleolus. It catalyses the reaction ATP + H2O = ADP + phosphate + H(+). ATP-dependent RNA helicase involved in 40S ribosomal subunit biogenesis. Required for the processing and cleavage of 35S pre-rRNA at sites A0, A1, and A2, leading to mature 18S rRNA. This Vanderwaltozyma polyspora (strain ATCC 22028 / DSM 70294 / BCRC 21397 / CBS 2163 / NBRC 10782 / NRRL Y-8283 / UCD 57-17) (Kluyveromyces polysporus) protein is ATP-dependent RNA helicase FAL1 (FAL1).